The following is a 465-amino-acid chain: MDQENFHGSSLPQQLQNLHIQPQQASPNPVQTGFAPRRHYNNLVGLGNGNAVSGSPVKGAPLGQRHVKLKKEKISAQVAQLSQPGQLQLSDVGDPALAGGSGLQGGVGLMGVILPSDEALKFVSETDANGLAMKTPVSILQELLSRRGITPGYELVQIEGAIHEPTFRFRVSFKDKDTPFTAMGAGRSKKEAKHAAARALIDKLIGAQLPESPSSSAGPSVTGLTVAGSGGDGNANATGGGDASDKTVGNPIGWLQEMCMQRRWPPPSYETETEVGLPHERLFTIACSILNYREMGKGKSKKIAKRLAAHRMWMRLQETPIDSGKISDSICGELEGEPRSSENYYGELKDISVPTLTTQHSNKVSQFHKTLKNATGKKLLKLQKTCLKNNKIDYIKLLGEIATENQFEVTYVDIEEKTFSGQFQCLVQLSTLPVGVCHGSGPTAADAQRHAAQNALEYLKIMTKK.

The tract at residues 1-337 (MDQENFHGSS…DSICGELEGE (337 aa)) is necessary for enhancing pre-miRNA processing by Dcr-1. A not required for interaction with Dcr-1 region spans residues 1 to 379 (MDQENFHGSS…TLKNATGKKL (379 aa)). Residues 1-392 (MDQENFHGSS…QKTCLKNNKI (392 aa)) form an important for homodimerization and interaction with Dcr-1 region. A sufficient for binding RNA region spans residues 129–211 (NGLAMKTPVS…DKLIGAQLPE (83 aa)). The interval 129–322 (NGLAMKTPVS…WMRLQETPID (194 aa)) is necessary for promoting preferential binding of Dcr-2 to the less stably base paired ends of siRNAs. In terms of domain architecture, DRBM 1 spans 135 to 206 (TPVSILQELL…ARALIDKLIG (72 aa)). Positions 209–249 (LPESPSSSAGPSVTGLTVAGSGGDGNANATGGGDASDKTVG) are enables simultaneous binding of both DRBM 1 and 2 domains to dsRNA. The disordered stretch occupies residues 210-246 (PESPSSSAGPSVTGLTVAGSGGDGNANATGGGDASDK). The segment covering 211-223 (ESPSSSAGPSVTG) has biased composition (polar residues). Residues 220–465 (SVTGLTVAGS…LEYLKIMTKK (246 aa)) form a necessary and sufficient for enhancing processing of pre-miRNAs by Dcr-1 region. Residues 228–242 (GSGGDGNANATGGGD) are compositionally biased toward gly residues. A sufficient for binding RNA region spans residues 245 to 322 (DKTVGNPIGW…WMRLQETPID (78 aa)). One can recognise a DRBM 2 domain in the interval 250–318 (NPIGWLQEMC…AHRMWMRLQE (69 aa)). A necessary for binding pre-miRNA region spans residues 308-309 (AA). The tract at residues 338–359 (PRSSENYYGELKDISVPTLTTQ) is required for binding to Dcr-2 and to fully enhance Dcr-2 mediated cleavage of 3' overhanging termini (3'ovr) and blunt termini (BLT) dsRNAs. However, this region is dispensable for binding the dsRNA substrates. The necessary for interaction with Dcr-1 stretch occupies residues 340–465 (SSENYYGELK…LEYLKIMTKK (126 aa)). Positions 392–463 (IDYIKLLGEI…NALEYLKIMT (72 aa)) are sufficent for binding to Dcr-1. Positions 393-461 (DYIKLLGEIA…AQNALEYLKI (69 aa)) constitute a DRBM 3 domain.

As to quaternary structure, homodimer. Interacts with dicer enzyme Dcr-1. In terms of assembly, component of the miRNA-directed RNA-induced loading complex (miRLC), composed of at least Dcr-1, AGO1 and loqs isoform PB (loqs-PB), which processes pre-miRNAs and loads the resulting miRNAs into the Argonaute 1 (AGO1)-containing RNA-induced silencing complex (miRISC) to target the selective destruction of homologous RNAs. Interacts (via DRBM 3 domain) with dicer enzyme Dcr-1 (via helicase domain). Different regions of the Dcr-1-loqs-PB heterodimer collaborate to recognize, bind and position the pre-miRNA for Dcr-1 mediated cleavage. In the absence of miRNA substrates, the heterodimer favors a closed, catalytically incompetent, conformation, whereas binding of authentic pre-miRNA substrates stabilizes the relatively rare open, catalytically competent, conformation of the heterodimer. During substrate recognition, the Dcr-1 PAZ domain and pre-miRNA interact with the DRBM 1 domain of loqs-PB, which likely contributes to substrate recognition and stabilization. At the miRNA binding stage, the Dcr-1 DRBM domain and the loqs-PB DRBM domains then bind the pre-miRNA in tandem to form a tight 'belt' around the pre-miRNA stem, the pre-miRNA loop is docked in the loop-binding region formed by DUF283, DRBM and part of the helicase domain of Dcr-1, and the loqs-PB DRBM 1 and the wing domain of Dcr-1 act together to bind the 5' and 3' pre-miRNA termini within the PAZ and platform domains of Dcr-1. These interactions between the proteins and their pre-miRNA substrate stabilize a distorted form of the pre-miRNA and position the scissile phosphodiester bonds of the pre-miRNA at the RNase III catalytic cleavage sites of Dcr-1. Following Dcr-1 mediated cleavage, the miRNA duplex remains bound to loqs-PB DRBM 1, which dissociates from the Dcr-1 RNase III 1 domain but remains in contact with the PAZ and wing domains suggesting that the heterodimer presents the mature miRNA to AGO2 for loading into the RNA-induced silencing complex (miRISC). As to quaternary structure, able to interact with dicer enzyme Dcr-1. However, the relevance of such an interaction is unclear in vivo and another report found that it did not interact with Dcr-1. Monomer. Interacts (via C-terminus) with dicer enzyme Dcr-2 (via N-terminus); interaction is required for RNAi activity in producing siRNAs from a subset of endo- and exo-dsRNAs, and in the alternative siRLC, the interaction enhances the binding preference of the protein for the thermodynamically more stable ends of endogenous siRNAs. Interaction with Dcr-2 is RNA independent, however the isoform must bind both dsRNA and Dcr-2 to enhance Dcr-2 cleavage activity. Does not interact with Dcr-1. As to expression, strong expression in males and females. Expression in ovaries is relatively weak. In terms of tissue distribution, strong expression in females and relatively weak expression in males. Strong expression in ovaries.

It is found in the cytoplasm. It localises to the cytosol. Its function is as follows. Double-stranded RNA-binding protein which can function in gene silencing by acting with Dcr-1 to enhance its ATP-independent processing of a specific subset of precursor micro-RNAs (pre-miRNAs) to mature miRNAs. Some reports found it was able to enhance the efficiency of pre-miRNA processing by Dcr-1, and can shift the cleavage site of Dcr-1 altering the length of the mature miRNAs produced by Dcr-1 alone. However, in contrast to isoform PB, it is not necessary or sufficient for enhancing miRNA biogenesis, and is not required for development or female germline stem cell (GSC) maintenance. Another report also found that it decreases binding of Dcr-1 to the miRNA substrate let-7. In terms of biological role, double-stranded RNA-binding protein which functions in gene silencing by acting with Dcr-1 to enhance its ATP-independent processing of a specific subset of precursor micro-RNAs (pre-miRNAs) to mature miRNAs. Function is essential for development and female germline stem cell (GSC) maintenance. Functions in miRNA-mediated gene silencing by enhancing the binding affinity and specific pre-miRNA processing activity of Dcr-1, and as part of the loqs-PB-Dcr-1 complex, is involved in substrate discrimination, correctly positioning the pre-miRNA in the Dcr-1 catalytic center for cleavage, and miRNA loading into the Argonaute 1 (Ago1)-containing RNA-induced silencing complex (miRISC). Increases the binding affinity of Dcr-1 to pre-miRNAs, thereby increasing dicing efficiency and broadening the range of substrates that can be processed by the dicer. It may also confer the substrate specificity of Dcr-1 towards pre-miRNAs, as in its absence Dcr-1 displays siRNA-generating activity towards long dsRNA substrates. It can also shift the cleavage site of Dcr-1 for a small number of pre-miRNAs, changing the length of the mature miRNAs produced by Dcr-1 alone. Increases the range of pre-miRNAs that can be processed by Dcr-1, by enhancing the dicing of suboptimal hairpin substrates including ones with mismatches at the dicing site. This function may also promote the generation of novel miRNA genes as it appears to have an important role in processing evolutionarily young miRNA genes, suggesting that it may also enhance dicing of substrates that have not acquired hairpin features required for efficient miRNA processing. As newly emerged miRNAs can have deleterious or beneficial effects on fitness, this function is likely part of a regulatory system that prevents excessive emergence of active miRNA genes and thus keeps them within an optimal range. Also forms a RISC loading complex (miRLC) with Dcr-1 to mediate Ago1-loading of mature miRNAs into the RNA-induced silencing complex (miRISC). In female ovaries, required for Dcr-1 to generate the twenty-three nucleotide isomiR variant of miR-307a which is able to repress its targets Gk2 and tara. Double-stranded RNA-binding protein which has an essential role in gene silencing (RNAi) by acting with Dcr-2 to enhance its ATP-dependent processing of a subset of endogenous (endo) and exogenous (exo) dsRNAs into short interfering RNAs (siRNAs). Functions in RNAi by increasing the initial binding affinity of Dcr-2 to certain dsRNA substrates, and in the absence of r2d2, may also function in siRNA loading into the Argonaute 2 (AGO2)-containing RNA-induced silencing complex (siRISC) and guide strand selection for target silencing by the siRISC. Promotes Dcr-2 cleavage of a subset of dsRNAs, including endo-dsRNAs derived from convergent transcription, inverted repeats and transposons. Also enables Dcr-2 to produce hairpin-derived endo-siRNAs in the presence of cellular inhibitory inorganic phosphate, likely by increasing the binding affinity of the enzyme to the hairpin dsRNAs allowing the dsRNA to displace phosphate bound to Dcr-2. According to many reports, the cleavage reaction mode of Dcr-2 changes according to the termini of the dsRNA substrate, with the enzyme displaying a preference for processing blunt termini (BLT), likely non-self dsRNAs, over dsRNAs with 2 nucleotides 3' overhanging (3'ovr) termini, which are typically the structure of endo-dsRNAs. According to many reports, interaction with Loqs-PD modifies the molecular recognition mechanisms of Dcr-2 towards sub-optimal 3'ovr dsRNA substrates and thus enables the dicer to cleave endo-dsRNA templates with diverse termini. However, according to another report, the mode of cleavage reaction is not affected by the presence or absence of loqs-PD. In the absence of r2d2, may also form an alternative RISC loading complex (siRLC) with Dcr-2 to mediate AGO2-loading of endo- and exo-siRNAs into the RNA-induced silencing complex (siRISC). Many reports suggest that loqs-PD and r2d2 function independently with dcr-2 in distinct siRNA pathways, and may even compete for binding to the enzyme. Loaded siRNAs serve as a guide to direct the siRISC to complementary RNAs to degrade them or prevent their translation. The siRLC plays an important role in the ATP-dependent asymmetry sensing of the duplex, and is therefore also responsible for the selection of the strand that ultimately acts as the guide siRNA for the siRISC. Thermodynamically asymmetric endo-siRNAs can be pre-oriented in the siRLC by the Loqs-PD and DCr-2 complex, which preferentially binds to the most thermodynamically stable strand prior to loading into the siRISC. Appears to be involved in promoting double-strand breaks (DSBs) following exposure to a low-dose/dose-rate (LDR) of ionizing radiation. This Drosophila melanogaster (Fruit fly) protein is Protein Loquacious.